We begin with the raw amino-acid sequence, 150 residues long: D-aminoacyl-tRNA deacylase (150 aa).

Residues 138–139 (GP) carry the Gly-cisPro motif, important for rejection of L-amino acids motif.

This sequence belongs to the DTD family. As to quaternary structure, homodimer.

The protein localises to the cytoplasm. It catalyses the reaction glycyl-tRNA(Ala) + H2O = tRNA(Ala) + glycine + H(+). The enzyme catalyses a D-aminoacyl-tRNA + H2O = a tRNA + a D-alpha-amino acid + H(+). Functionally, an aminoacyl-tRNA editing enzyme that deacylates mischarged D-aminoacyl-tRNAs. Also deacylates mischarged glycyl-tRNA(Ala), protecting cells against glycine mischarging by AlaRS. Acts via tRNA-based rather than protein-based catalysis; rejects L-amino acids rather than detecting D-amino acids in the active site. By recycling D-aminoacyl-tRNA to D-amino acids and free tRNA molecules, this enzyme counteracts the toxicity associated with the formation of D-aminoacyl-tRNA entities in vivo and helps enforce protein L-homochirality. This chain is D-aminoacyl-tRNA deacylase, found in Salinibacter ruber (strain DSM 13855 / M31).